A 277-amino-acid chain; its full sequence is NH(3)-dependent NAD(+) synthetase (277 aa).

Position 36–43 (36–43 (GLSGGIDS)) interacts with ATP. A Mg(2+)-binding site is contributed by Asp-42. Arg-118 contributes to the deamido-NAD(+) binding site. Thr-138 contributes to the ATP binding site. Glu-143 contributes to the Mg(2+) binding site. ATP-binding residues include Lys-167 and Ser-189.

It belongs to the NAD synthetase family. Homodimer.

It carries out the reaction deamido-NAD(+) + NH4(+) + ATP = AMP + diphosphate + NAD(+) + H(+). It functions in the pathway cofactor biosynthesis; NAD(+) biosynthesis; NAD(+) from deamido-NAD(+) (ammonia route): step 1/1. Its function is as follows. Catalyzes the ATP-dependent amidation of deamido-NAD to form NAD. Uses ammonia as a nitrogen source. This is NH(3)-dependent NAD(+) synthetase from Pelodictyon phaeoclathratiforme (strain DSM 5477 / BU-1).